Reading from the N-terminus, the 429-residue chain is Gamma-glutamyl phosphate reductase (429 aa).

The protein belongs to the gamma-glutamyl phosphate reductase family.

It is found in the cytoplasm. The enzyme catalyses L-glutamate 5-semialdehyde + phosphate + NADP(+) = L-glutamyl 5-phosphate + NADPH + H(+). It participates in amino-acid biosynthesis; L-proline biosynthesis; L-glutamate 5-semialdehyde from L-glutamate: step 2/2. In terms of biological role, catalyzes the NADPH-dependent reduction of L-glutamate 5-phosphate into L-glutamate 5-semialdehyde and phosphate. The product spontaneously undergoes cyclization to form 1-pyrroline-5-carboxylate. In Methylocella silvestris (strain DSM 15510 / CIP 108128 / LMG 27833 / NCIMB 13906 / BL2), this protein is Gamma-glutamyl phosphate reductase.